Here is a 271-residue protein sequence, read N- to C-terminus: MNIKQVDEIKITRYILKATFEDWMDFSVNDVVIVGAGPSGLAAAYYSAKAGLKTTVFERRLSFGGGIGGGAMLFHKIVIESPADEILREIGVKLQKFEEGVYVVDSSEFMAKLAAATIDAGAKIIHGVTVDDVIFRENPLRVTGVAVEWTATQMASLHVDPLFISAKAVVDATGHDAEVISVASRKIPELGIVIPGEKSAYSEIAEQLTVEQSGEVAPGLYAAGMAVTEIKAIPRMGPIFGAMLLSGKKVAEDIIKNLQANSATLKSVQKE.

Residues Ser39, 58–59 (ER), Gly66, Val130, and 158–160 (HVD) each bind NAD(+). Positions 160 and 175 each coordinate Fe cation. NAD(+) is bound at residue Met225. Arg235 is a glycine binding site.

The protein belongs to the THI4 family. As to quaternary structure, homooctamer; tetramer of dimers. Fe(2+) serves as cofactor.

The enzyme catalyses hydrogen sulfide + glycine + NAD(+) = ADP-5-ethyl-4-methylthiazole-2-carboxylate + nicotinamide + 3 H2O + H(+). Its pathway is cofactor biosynthesis; thiamine diphosphate biosynthesis. Involved in the biosynthesis of the thiazole moiety of thiamine. Catalyzes the conversion of NAD and glycine to adenosine diphosphate 5-(2-hydroxyethyl)-4-methylthiazole-2-carboxylate (ADT), an adenylated thiazole intermediate, using free sulfide as a source of sulfur. This is Thiamine thiazole synthase from Metallosphaera sedula (strain ATCC 51363 / DSM 5348 / JCM 9185 / NBRC 15509 / TH2).